We begin with the raw amino-acid sequence, 252 residues long: Large ribosomal subunit protein uL30 (252 aa).

The protein belongs to the universal ribosomal protein uL30 family.

Functionally, binds to G-rich structures in 28S rRNA and in mRNAs. Plays a regulatory role in the translation apparatus; inhibits cell-free translation of mRNAs. In Drosophila melanogaster (Fruit fly), this protein is Large ribosomal subunit protein uL30 (RpL7).